The primary structure comprises 125 residues: Large-conductance mechanosensitive channel (125 aa).

A run of 3 helical transmembrane segments spans residues 19-39 (VGVI…SNLI), 42-62 (LIGI…IGSA), and 67-87 (GSFL…FLMV).

The protein belongs to the MscL family. In terms of assembly, homopentamer.

It is found in the cell membrane. Its function is as follows. Channel that opens in response to stretch forces in the membrane lipid bilayer. May participate in the regulation of osmotic pressure changes within the cell. This is Large-conductance mechanosensitive channel from Limosilactobacillus fermentum (strain NBRC 3956 / LMG 18251) (Lactobacillus fermentum).